Reading from the N-terminus, the 401-residue chain is Regulatory protein E2 (401 aa).

A transactivation domain region spans residues 1 to 202 (MENLSSRLDL…KRFTNVMSST (202 aa)). The tract at residues 199-308 (MSSTSSPRAA…TPQKGHSSRL (110 aa)) is disordered. Composition is skewed to polar residues over residues 218–233 (PTLS…TSID) and 241–253 (GETS…QQKT). The segment covering 254 to 267 (PVRRRPYGRRRSRS) has biased composition (basic residues). The tract at residues 317–401 (DPPVVCVKGG…SVFLGQFNGS (85 aa)) is DNA-binding domain. A Glycyl lysine isopeptide (Lys-Gly) (interchain with G-Cter in SUMO) cross-link involves residue lysine 324.

Belongs to the papillomaviridae E2 protein family. In terms of assembly, binds DNA as homodimer. Interacts with protein E1; this interaction greatly increases E1 DNA-binding activity. Interacts with protein L1; this interaction enhances E2-dependent replication and transcription activation. Interacts with protein L2; this interaction inhibits E2 transcriptional activity but not DNA replication function E2. Interacts with protein E7; this interaction inhibits E7 oncogenic activity. Interacts with host TAF1; this interaction modulates E2-dependent transcriptional regulation. Interacts with host BRD4; this interaction mediates E2 transcriptional activation function. Additionally, the interaction with host BRD4 on mitotic chromosomes mediates tethering of the viral genome. Interacts with host TOPBP1; this interaction is required for optimal viral DNA replication. Phosphorylated. Post-translationally, sumoylation plays a regulatory role in E2 transcriptional activity.

It localises to the host nucleus. In terms of biological role, plays a role in the initiation of viral DNA replication. A dimer of E2 interacts with a dimer of E1 in order to improve specificity of E1 DNA binding activity. Once the complex recognizes and binds DNA at specific sites, the E2 dimer is removed from DNA. E2 also regulates viral transcription through binding to the E2RE response element (5'-ACCNNNNNNGGT-3') present in multiple copies in the regulatory regions of the viral genome. Activates or represses transcription depending on E2RE's position with regards to proximal promoter elements including the TATA-box. Repression occurs by sterically hindering the assembly of the transcription initiation complex. This chain is Regulatory protein E2, found in Homo sapiens (Human).